The primary structure comprises 128 residues: MAGRTTRKRRVKKNIESGVAHIHSTFNNTIVMITDAQGNAVAWSSAGALGFKGSRKSTPFAAQMAAEAAAKSAMEINMRTVAVTVKGPGSGRESAIRALAAAGLEVTSIKDVTPVPHNGSRPPKRRRV.

This sequence belongs to the universal ribosomal protein uS11 family. As to quaternary structure, part of the 30S ribosomal subunit. Interacts with proteins S7 and S18. Binds to IF-3.

Functionally, located on the platform of the 30S subunit, it bridges several disparate RNA helices of the 16S rRNA. Forms part of the Shine-Dalgarno cleft in the 70S ribosome. The sequence is that of Small ribosomal subunit protein uS11 from Leuconostoc mesenteroides subsp. mesenteroides (strain ATCC 8293 / DSM 20343 / BCRC 11652 / CCM 1803 / JCM 6124 / NCDO 523 / NBRC 100496 / NCIMB 8023 / NCTC 12954 / NRRL B-1118 / 37Y).